The following is a 93-amino-acid chain: MSAAARGLVRLVKSYQRHLSPRKPAPTCRFTPTCSQYAVEAIERHGALKGAWLAAWRVLRCNPLVPGGCDPVPEHFPSWRGPHPKTPSRKTPE.

The segment at 72–93 (VPEHFPSWRGPHPKTPSRKTPE) is disordered. The segment covering 82–93 (PHPKTPSRKTPE) has biased composition (basic residues).

The protein belongs to the UPF0161 family.

It localises to the cell membrane. In terms of biological role, could be involved in insertion of integral membrane proteins into the membrane. In Deinococcus geothermalis (strain DSM 11300 / CIP 105573 / AG-3a), this protein is Putative membrane protein insertion efficiency factor.